The chain runs to 95 residues: Nodulin (95 aa).

The protein is Nodulin of Striga hermonthica (Purple witchweed).